Reading from the N-terminus, the 400-residue chain is Enoyl-[acyl-carrier-protein] reductase [NADH] (400 aa).

NAD(+) is bound by residues 48–53 (GSSSGY), 74–75 (FE), 111–112 (DA), and 139–140 (LA). Tyr-225 lines the substrate pocket. Residue Tyr-235 is the Proton donor of the active site. NAD(+)-binding positions include Lys-244 and 273 to 275 (VVT).

Belongs to the TER reductase family. Monomer.

The enzyme catalyses a 2,3-saturated acyl-[ACP] + NAD(+) = a (2E)-enoyl-[ACP] + NADH + H(+). It participates in lipid metabolism; fatty acid biosynthesis. Its function is as follows. Involved in the final reduction of the elongation cycle of fatty acid synthesis (FAS II). Catalyzes the reduction of a carbon-carbon double bond in an enoyl moiety that is covalently linked to an acyl carrier protein (ACP). In Aliivibrio fischeri (strain MJ11) (Vibrio fischeri), this protein is Enoyl-[acyl-carrier-protein] reductase [NADH].